The following is a 665-amino-acid chain: ATPase WRNIP1 (665 aa).

The segment at 17-44 adopts a UBZ4-type zinc-finger fold; the sequence is QVQCPVCQQMMPAAHINSHLDRCLLLHP. The Zn(2+) site is built by Cys-20, Cys-23, His-31, His-35, and Cys-39. The tract at residues 48–190 is disordered; that stretch reads AEPAAGSHRA…DGEDDPGHWD (143 aa). Residues Ser-65 and Ser-75 each carry the phosphoserine modification. Residues 76–89 are compositionally biased toward polar residues; it reads ESSALKQPATPTAA. Residue Lys-81 forms a Glycyl lysine isopeptide (Lys-Gly) (interchain with G-Cter in ubiquitin) linkage. Thr-85 bears the Phosphothreonine mark. Phosphoserine occurs at positions 91 and 92. Positions 92–104 are enriched in acidic residues; that stretch reads SEGEGEEGDDGGE. Thr-116 is subject to Phosphothreonine. Over residues 130–155 the composition is skewed to low complexity; sequence RSSSPGRKGSGKRPAAAAAAGSASPR. The residue at position 139 (Ser-139) is a Phosphoserine. Lys-141 is covalently cross-linked (Glycyl lysine isopeptide (Lys-Gly) (interchain with G-Cter in ubiquitin)). Ser-153 carries the phosphoserine modification. A compositionally biased stretch (acidic residues) spans 159–184; that stretch reads EAEAQEEEEAVGDGDGDGDADADGED. Residue Lys-225 forms a Glycyl lysine isopeptide (Lys-Gly) (interchain with G-Cter in ubiquitin) linkage. 270-276 contributes to the ATP binding site; sequence PGCGKTT. Glycyl lysine isopeptide (Lys-Gly) (interchain with G-Cter in ubiquitin) cross-links involve residues Lys-301, Lys-310, Lys-316, Lys-322, and Lys-335. A Glycyl lysine isopeptide (Lys-Gly) (interchain with G-Cter in SUMO2); alternate cross-link involves residue Lys-482. Residue Lys-482 forms a Glycyl lysine isopeptide (Lys-Gly) (interchain with G-Cter in ubiquitin); alternate linkage. Tyr-534 and Tyr-562 each carry phosphotyrosine. Lys-627 participates in a covalent cross-link: Glycyl lysine isopeptide (Lys-Gly) (interchain with G-Cter in ubiquitin). Lys-633 is covalently cross-linked (Glycyl lysine isopeptide (Lys-Gly) (interchain with G-Cter in ubiquitin); alternate). Lys-633 is modified (N6-acetyllysine; alternate). Residue Lys-636 forms a Glycyl lysine isopeptide (Lys-Gly) (interchain with G-Cter in ubiquitin) linkage.

The protein belongs to the AAA ATPase family. RarA/MGS1/WRNIP1 subfamily. As to quaternary structure, forms homooligomers, possibly octamers. Directly interacts with POLD1, POLD2 and POLD4. Interacts with the N-terminal domain of WRN. Interacts (via UBZ4-type zinc finger) with monoubiquitin and polyubiquitin. Interacts with TRIM14 and PPP6C; these interactions positively regulate the RIGI signaling pathway. In terms of processing, sumoylated with SUMO1 and SUMO2/3. In terms of tissue distribution, ubiquitously expressed.

Its subcellular location is the nucleus. It is found in the cytoplasm. The catalysed reaction is ATP + H2O = ADP + phosphate + H(+). Functions as a modulator of initiation or reinitiation events during DNA polymerase delta-mediated DNA synthesis. In the presence of ATP, stimulation of DNA polymerase delta-mediated DNA synthesis is decreased. Also plays a role in the innate immune defense against viruses. Stabilizes the RIGI dsRNA interaction and promotes RIGI 'Lys-63'-linked polyubiquitination. In turn, RIGI transmits the signal through mitochondrial MAVS. The protein is ATPase WRNIP1 of Homo sapiens (Human).